The sequence spans 491 residues: MYIVQIASECAPVIKAGGLGDVVYGLSRELEVRGHCVELVLPKYDTMRYDQIWGLHDAYRDLWVPWYGGAIHCSVYCGWVHGRLCFFIEPHSGDNFFNRGCYYGCPDDNMRFAFFSKAALEFLLKSNKRPDIIHCHDWQTGLVPVLLFEIYKYHGMENQRVCYTIHNFKHQGFGGPEILWATGLNREPYYFHYDRLRDNFNPFALNFMKGGIVFSNFVTTVSPTHALEARFGNYNYGLGHTLYLHQHKFRGVLNGIDYDIWNPEIDRFIPFHYTAQTLENKAKNKKALRDQLWLQDVDKPIVAYIGRLDEQKGVHLVHHAIYRSLFKNAQFVLLGSATEPGIGAWFAHEKRYLNDNPDVHIELGFNEELSHLIYAGADILVVPSHYEPCGLTQMIGLKYGTVPVVRGVGGLVDTVFDRDYDTRKLPEQRNGYVFYHTDRAALESALDRAIDLWYTAPDQFRQLQVQGMSYDYSWNYPGKEYLEIYEFIRHR.

Lys15 serves as a coordination point for ADP-alpha-D-glucose.

It belongs to the glycosyltransferase 1 family. Bacterial/plant glycogen synthase subfamily.

It carries out the reaction [(1-&gt;4)-alpha-D-glucosyl](n) + ADP-alpha-D-glucose = [(1-&gt;4)-alpha-D-glucosyl](n+1) + ADP + H(+). The protein operates within glycan biosynthesis; glycogen biosynthesis. In terms of biological role, synthesizes alpha-1,4-glucan chains using ADP-glucose. The protein is Glycogen synthase 1 of Synechococcus sp. (strain JA-3-3Ab) (Cyanobacteria bacterium Yellowstone A-Prime).